Here is a 461-residue protein sequence, read N- to C-terminus: MSPNTWVIEMPTQKTRSHPYPRRISPYRPPVLNRDAFSRDAPPMPARNHDHPVFEDIRTILSVLKASGLMPIYEQVSDYEVGPPTKTNEFYSFFVRGVVHALTIFNVYSLFTPISAQLFFSYRETDNVNQWIELLLCILTYTLTVFVCAHNTTSMLRIMNEILQLDEEVRRQFGANLSQNFGFLVKFLVGITACQAYIIVLKIYAVQGEITPTSYILLAFYGIQNGLTATYIVFASALLRIVYIRFHFINQLLNGYTYGQQHRRKEGGARARRQRGDVNPNVNPALMEHFPEDSLFIYRMHNKLLRIYKGINDCCNLILVSFLGYSFYTVTTNCYNLFVQITGKGMVSPNILQWCFAWLCLHVSLLALLSRSCGLTTTEANATSQILARVYAKSKEYQNIIDKFLTKSIKQEVQFTAYGFFAIDNSTLFKIFSAVTTYLVILIQFKQLEDSKVEDPVPEQT.

Topologically, residues 1-100 (MSPNTWVIEM…YSFFVRGVVH (100 aa)) are cytoplasmic. Residues 101 to 121 (ALTIFNVYSLFTPISAQLFFS) traverse the membrane as a helical segment. The Extracellular segment spans residues 122–127 (YRETDN). The helical transmembrane segment at 128 to 148 (VNQWIELLLCILTYTLTVFVC) threads the bilayer. Over 149–180 (AHNTTSMLRIMNEILQLDEEVRRQFGANLSQN) the chain is Cytoplasmic. A helical membrane pass occupies residues 181-201 (FGFLVKFLVGITACQAYIIVL). At 202–214 (KIYAVQGEITPTS) the chain is on the extracellular side. The chain crosses the membrane as a helical span at residues 215–235 (YILLAFYGIQNGLTATYIVFA). The Cytoplasmic portion of the chain corresponds to 236–317 (SALLRIVYIR…YKGINDCCNL (82 aa)). Residues 318–338 (ILVSFLGYSFYTVTTNCYNLF) traverse the membrane as a helical segment. Residues 339-348 (VQITGKGMVS) are Extracellular-facing. The chain crosses the membrane as a helical span at residues 349-369 (PNILQWCFAWLCLHVSLLALL). Residues 370-414 (SRSCGLTTTEANATSQILARVYAKSKEYQNIIDKFLTKSIKQEVQ) are Cytoplasmic-facing. The chain crosses the membrane as a helical span at residues 415-435 (FTAYGFFAIDNSTLFKIFSAV). Over 436 to 461 (TTYLVILIQFKQLEDSKVEDPVPEQT) the chain is Extracellular.

Belongs to the insect chemoreceptor superfamily. Gustatory receptor (GR) family. Gr21a subfamily. Expressed in the adult labellar chemosensory neurons. Expressed in tarsal neurons for male-male courtship suppression. In larvae, is expressed in neurons of the terminal external chemosensory organ, and the dorsal and posterior external chemosensory organs.

The protein resides in the cell membrane. In terms of biological role, gustatory receptor which mediates acceptance or avoidance behavior, depending on its substrates. Required for the response to N,N-Diethyl-meta-toluamide (DEET), the most widely used insect repellent worldwide. Functions as a pheromone receptor for a male inhibitory pheromone and promotes male-male aggression and suppresses male-male courtship. Also promotes preferentially virgin females courting over mated females. This Drosophila melanogaster (Fruit fly) protein is Gustatory and pheromone receptor 32a (Gr32a).